The primary structure comprises 24 residues: L-amino-acid oxidase (24 aa).

Belongs to the flavin monoamine oxidase family. FIG1 subfamily. In terms of assembly, homodimer; non-covalently linked. FAD serves as cofactor. N-glycosylated. Expressed by the venom gland.

The protein resides in the secreted. It carries out the reaction an L-alpha-amino acid + O2 + H2O = a 2-oxocarboxylate + H2O2 + NH4(+). Catalyzes an oxidative deamination of predominantly hydrophobic and aromatic L-amino acids, thus producing hydrogen peroxide that may contribute to the diverse toxic effects of this enzyme. Exhibits diverse biological activities, such as hemorrhage, hemolysis, edema, apoptosis, and antiparasitic activities. This protein has antibacterial activity (against E.coli, S.aureus, and B.dysenteriae), cytotoxic activity, as well as an ability to induce platelet aggregation. Effects of snake L-amino oxidases on platelets are controversial, since they either induce aggregation or inhibit agonist-induced aggregation. These different effects are probably due to different experimental conditions. This is L-amino-acid oxidase from Protobothrops mucrosquamatus (Taiwan habu).